Reading from the N-terminus, the 110-residue chain is Small ubiquitin-related modifier 3 (110 aa).

Glycyl lysine isopeptide (Lys-Gly) (interchain with G-Cter in SUMO2) cross-links involve residues lysine 5 and lysine 7. Lysine 11 participates in a covalent cross-link: Glycyl lysine isopeptide (Lys-Gly) (interchain with G-Cter in SUMO); alternate. Residue lysine 11 forms a Glycyl lysine isopeptide (Lys-Gly) (interchain with G-Cter in SUMO2); alternate linkage. A Ubiquitin-like domain is found at 15-92 (DHINLKVAGQ…IDVFQQQTGG (78 aa)). Residues 89 to 101 (QTGGTASRASVPT) show a composition bias toward polar residues. Positions 89 to 110 (QTGGTASRASVPTPSHFPDICY) are disordered. Residue glycine 92 forms a Glycyl lysine isopeptide (Gly-Lys) (interchain with K-? in acceptor proteins) linkage. Positions 93–110 (TASRASVPTPSHFPDICY) are excised as a propeptide.

Belongs to the ubiquitin family. SUMO subfamily. Interacts with SAE2 and UBE2I. Covalently attached to a number of proteins. Interacts with USP25 (via ts SIM domain); the interaction sumoylates USP25 and inhibits its ubiquitin hydrolyzing activity. Interacts with BMAL1. Post-translationally, polymeric chains can be formed through Lys-11 cross-linking. In terms of processing, cleavage of precursor form by SENP1, SENP2 or SENP5 is necessary for function.

Its subcellular location is the cytoplasm. It is found in the nucleus. The protein resides in the PML body. In terms of biological role, ubiquitin-like protein which can be covalently attached to target lysines either as a monomer or as a lysine-linked polymer. Does not seem to be involved in protein degradation and may function as an antagonist of ubiquitin in the degradation process. Plays a role in a number of cellular processes such as nuclear transport, DNA replication and repair, mitosis and signal transduction. Covalent attachment to its substrates requires prior activation by the E1 complex SAE1-SAE2 and linkage to the E2 enzyme UBE2I, and can be promoted by an E3 ligase such as PIAS1-4, RANBP2 or CBX4. Plays a role in the regulation of sumoylation status of SETX. The polypeptide is Small ubiquitin-related modifier 3 (Sumo3) (Rattus norvegicus (Rat)).